Here is a 660-residue protein sequence, read N- to C-terminus: Zinc transporter ZIP4 (660 aa).

Residues 1-22 form the signal peptide; that stretch reads MLPKSVTQGLVLALLVGTVAVA. At 23–337 the chain is on the extracellular side; sequence RPRNLLSLLA…QDQLSQTERY (315 aa). 3 cysteine pairs are disulfide-bonded: Cys56/Cys61, Cys64/Cys110, and Cys160/Cys195. 2 N-linked (GlcNAc...) asparagine glycosylation sites follow: Asn192 and Asn219. The tract at residues 233-273 is disordered; the sequence is GVGGEDHSDHDDHGDHADHSHPDRKASHQDSELHTPHNSNS. Residues 236–267 are compositionally biased toward basic and acidic residues; sequence GEDHSDHDDHGDHADHSHPDRKASHQDSELHT. N-linked (GlcNAc...) asparagine glycosylation occurs at Asn272. Cys280 and Cys319 form a disulfide bridge. The chain crosses the membrane as a helical span at residues 338 to 358; sequence LYGSLATLLICLCAVFGLLLL. The Cytoplasmic segment spans residues 359 to 376; it reads TCAKCSTATHYIMQTFLS. The chain crosses the membrane as a helical span at residues 377 to 397; that stretch reads LAVGALTGDALLHLIPKVLGL. At 398 to 420 the chain is on the extracellular side; that stretch reads HTHGGEGHTHEEEVGVGGQATWR. A helical membrane pass occupies residues 421-441; that stretch reads LLAVLGGFYIFFLFESFFNLL. Over 442 to 511 the chain is Cytoplasmic; it reads LPRDQDSEKD…LRAELRLLPY (70 aa). Positions 465-467 match the Essential for SLC39A4 endocytosis motif; sequence LQL. Residues 512 to 531 form a helical membrane-spanning segment; sequence LITLGDAVHNFADGLAVGAA. Zn(2+)-binding residues include His520, Asn521, and Asp524. The Extracellular portion of the chain corresponds to 532–539; it reads FSSSWKTG. Residues 540 to 566 form a helical membrane-spanning segment; sequence LATSLAVFCHELPHELGDFAALLHAGL. Residues His549, Glu550, and His553 each coordinate Zn(2+). The Cytoplasmic segment spans residues 567–571; it reads SVKRA. Residues 572–592 form a helical membrane-spanning segment; sequence LLLNLASALTAFAGLYVALAV. Over 593–599 the chain is Extracellular; sequence GVGEEGE. A helical transmembrane segment spans residues 600–620; sequence AWILAVATGLFLYVALCDMLP. At 621–630 the chain is on the cytoplasmic side; it reads AMMNVRDQRP. The chain crosses the membrane as a helical span at residues 631–651; the sequence is WLLFLLHNVGLLGGWTVLLLL. Residues 652 to 660 are Extracellular-facing; that stretch reads SLYEDNITF. An N-linked (GlcNAc...) asparagine glycan is attached at Asn657.

This sequence belongs to the ZIP transporter (TC 2.A.5) family. As to quaternary structure, homodimer. Homodimerization is mediated by the transmembrane domain. In terms of processing, the extracellular N-terminal ectodomain is cleaved when cells are Zn(2+) deficient, N-terminally cleaved SLC39A4 is then internalized faster. Post-translationally, under excess Zn(2+) conditions, SLC39A4 on the cell surface is rapidly endocytosed, ubiquitinated, and degraded. N-glycosylated. Highly expressed in the small intestine and embryonic visceral yolk sac. Weakly expressed in the stomach and liver.

The protein localises to the cell membrane. Its subcellular location is the recycling endosome membrane. The protein resides in the apical cell membrane. The catalysed reaction is Zn(2+)(in) = Zn(2+)(out). Its function is as follows. Selective transporter that mediates the uptake of Zn(2+). Plays an essential role for dietary zinc uptake from small intestine. The Zn(2+) uniporter activity is regulated by zinc availability. Also exhibits polyspecific binding and transport of Cu(2+), Cd(2+) and possibly Ni(2+) but at higher concentrations. The sequence is that of Zinc transporter ZIP4 (Slc39a4) from Mus musculus (Mouse).